The sequence spans 149 residues: Oligosaccharyltransferase complex subunit ostc-B (149 aa).

Residues 1 to 32 are Cytoplasmic-facing; it reads MESLYRIPFTVLECPNLKLKKPSWLHMPSAMT. A helical membrane pass occupies residues 33–53; it reads VYAMVVVSYFLITGGIIYDVI. The Extracellular portion of the chain corresponds to 54 to 83; it reads VEPPSVGSMTDEHGHQRPVAFLAYRVNGQY. The chain crosses the membrane as a helical span at residues 84-104; that stretch reads IMEGLASSFLFTMGGLGFIIL. Topologically, residues 105-117 are cytoplasmic; it reads DRSNAPNIPKLNR. Residues 118 to 138 traverse the membrane as a helical segment; sequence FLLLFIGFVCVLLSFFMARVF. At 139–149 the chain is on the extracellular side; the sequence is MRMKLPGYLMG.

It belongs to the OSTC family. Specific component of the STT3A-containing form of the oligosaccharyltransferase (OST) complex.

It localises to the membrane. It participates in protein modification; protein glycosylation. In terms of biological role, specific component of the STT3A-containing form of the oligosaccharyl transferase (OST) complex that catalyzes the initial transfer of a defined glycan (Glc(3)Man(9)GlcNAc(2) in eukaryotes) from the lipid carrier dolichol-pyrophosphate to an asparagine residue within an Asn-X-Ser/Thr consensus motif in nascent polypeptide chains, the first step in protein N-glycosylation. N-glycosylation occurs cotranslationally and the complex associates with the Sec61 complex at the channel-forming translocon complex that mediates protein translocation across the endoplasmic reticulum (ER). All subunits are required for a maximal enzyme activity. In Xenopus laevis (African clawed frog), this protein is Oligosaccharyltransferase complex subunit ostc-B.